Reading from the N-terminus, the 401-residue chain is Imidazolonepropionase (401 aa).

Fe(3+) contacts are provided by H66 and H68. H66 and H68 together coordinate Zn(2+). Positions 75, 138, and 171 each coordinate 4-imidazolone-5-propanoate. Y138 contacts N-formimidoyl-L-glutamate. H236 contacts Fe(3+). H236 provides a ligand contact to Zn(2+). Q239 serves as a coordination point for 4-imidazolone-5-propanoate. D311 contributes to the Fe(3+) binding site. D311 lines the Zn(2+) pocket. Residues N313 and G315 each coordinate N-formimidoyl-L-glutamate. T316 is a binding site for 4-imidazolone-5-propanoate.

It belongs to the metallo-dependent hydrolases superfamily. HutI family. Requires Zn(2+) as cofactor. Fe(3+) serves as cofactor.

The protein resides in the cytoplasm. It catalyses the reaction 4-imidazolone-5-propanoate + H2O = N-formimidoyl-L-glutamate. It participates in amino-acid degradation; L-histidine degradation into L-glutamate; N-formimidoyl-L-glutamate from L-histidine: step 3/3. Functionally, catalyzes the hydrolytic cleavage of the carbon-nitrogen bond in imidazolone-5-propanoate to yield N-formimidoyl-L-glutamate. It is the third step in the universal histidine degradation pathway. This is Imidazolonepropionase from Pseudomonas putida (strain ATCC 47054 / DSM 6125 / CFBP 8728 / NCIMB 11950 / KT2440).